We begin with the raw amino-acid sequence, 258 residues long: UDP-2,3-diacylglucosamine hydrolase (258 aa).

The Mn(2+) site is built by aspartate 15, histidine 17, aspartate 48, asparagine 88, and histidine 123. 88 to 89 (NR) is a binding site for substrate. Substrate contacts are provided by aspartate 131, serine 169, asparagine 173, lysine 176, and histidine 204. Histidine 204 and histidine 206 together coordinate Mn(2+).

The protein belongs to the LpxH family. The cofactor is Mn(2+).

It localises to the cell inner membrane. The catalysed reaction is UDP-2-N,3-O-bis[(3R)-3-hydroxytetradecanoyl]-alpha-D-glucosamine + H2O = 2-N,3-O-bis[(3R)-3-hydroxytetradecanoyl]-alpha-D-glucosaminyl 1-phosphate + UMP + 2 H(+). It participates in glycolipid biosynthesis; lipid IV(A) biosynthesis; lipid IV(A) from (3R)-3-hydroxytetradecanoyl-[acyl-carrier-protein] and UDP-N-acetyl-alpha-D-glucosamine: step 4/6. Hydrolyzes the pyrophosphate bond of UDP-2,3-diacylglucosamine to yield 2,3-diacylglucosamine 1-phosphate (lipid X) and UMP by catalyzing the attack of water at the alpha-P atom. Involved in the biosynthesis of lipid A, a phosphorylated glycolipid that anchors the lipopolysaccharide to the outer membrane of the cell. The sequence is that of UDP-2,3-diacylglucosamine hydrolase from Bordetella bronchiseptica (strain ATCC BAA-588 / NCTC 13252 / RB50) (Alcaligenes bronchisepticus).